A 202-amino-acid chain; its full sequence is Peptide methionine sulfoxide reductase A3 (202 aa).

The disordered stretch occupies residues 1 to 34 (MNILNRLGLGSSGQTNMDPSPIAQGNDDDTPAPG). Serine 189 carries the post-translational modification Phosphoserine.

This sequence belongs to the MsrA Met sulfoxide reductase family. In terms of tissue distribution, expressed in rosette and cauline leaves, and at lower levels in roots, stems and flowers (at protein level).

The protein localises to the cytoplasm. The protein resides in the cytosol. It catalyses the reaction L-methionyl-[protein] + [thioredoxin]-disulfide + H2O = L-methionyl-(S)-S-oxide-[protein] + [thioredoxin]-dithiol. The enzyme catalyses [thioredoxin]-disulfide + L-methionine + H2O = L-methionine (S)-S-oxide + [thioredoxin]-dithiol. Catalyzes the reduction of methionine sulfoxide (MetSO) to methionine in proteins. Plays a protective role against oxidative stress by restoring activity to proteins that have been inactivated by methionine oxidation. May prevent cellular oxidative damage due to light exposure. MSRA family specifically reduces the MetSO S-enantiomer. In Arabidopsis thaliana (Mouse-ear cress), this protein is Peptide methionine sulfoxide reductase A3 (MSRA3).